Here is a 138-residue protein sequence, read N- to C-terminus: ATP synthase epsilon chain (138 aa).

The protein belongs to the ATPase epsilon chain family. F-type ATPases have 2 components, CF(1) - the catalytic core - and CF(0) - the membrane proton channel. CF(1) has five subunits: alpha(3), beta(3), gamma(1), delta(1), epsilon(1). CF(0) has three main subunits: a, b and c.

The protein resides in the cellular thylakoid membrane. Its function is as follows. Produces ATP from ADP in the presence of a proton gradient across the membrane. The sequence is that of ATP synthase epsilon chain (atpC) from Synechococcus sp. (strain PCC 6716).